We begin with the raw amino-acid sequence, 400 residues long: Methylthioribose kinase (400 aa).

Residues N40, K57, and E111–L113 contribute to the ATP site. D229 provides a ligand contact to substrate. D246 to E248 provides a ligand contact to ATP. Residue R344 coordinates substrate.

This sequence belongs to the methylthioribose kinase family. As to quaternary structure, homodimer.

The enzyme catalyses 5-(methylsulfanyl)-D-ribose + ATP = 5-(methylsulfanyl)-alpha-D-ribose 1-phosphate + ADP + H(+). It participates in amino-acid biosynthesis; L-methionine biosynthesis via salvage pathway; S-methyl-5-thio-alpha-D-ribose 1-phosphate from S-methyl-5'-thioadenosine (hydrolase route): step 2/2. In terms of biological role, catalyzes the phosphorylation of methylthioribose into methylthioribose-1-phosphate. This is Methylthioribose kinase from Pectobacterium atrosepticum (strain SCRI 1043 / ATCC BAA-672) (Erwinia carotovora subsp. atroseptica).